Here is a 299-residue protein sequence, read N- to C-terminus: S-methyl-5'-thioadenosine phosphorylase (299 aa).

Phosphate is bound by residues Ser14, 56 to 57 (RH), and 89 to 90 (SA). Met191 is a substrate binding site. Thr192 contributes to the phosphate binding site. 215-217 (DYD) lines the substrate pocket.

This sequence belongs to the PNP/MTAP phosphorylase family. MTAP subfamily. Homohexamer. Dimer of a homotrimer.

The catalysed reaction is S-methyl-5'-thioadenosine + phosphate = 5-(methylsulfanyl)-alpha-D-ribose 1-phosphate + adenine. It functions in the pathway amino-acid biosynthesis; L-methionine biosynthesis via salvage pathway; S-methyl-5-thio-alpha-D-ribose 1-phosphate from S-methyl-5'-thioadenosine (phosphorylase route): step 1/1. Functionally, catalyzes the reversible phosphorylation of S-methyl-5'-thioadenosine (MTA) to adenine and 5-methylthioribose-1-phosphate. Involved in the breakdown of MTA, a major by-product of polyamine biosynthesis. Responsible for the first step in the methionine salvage pathway after MTA has been generated from S-adenosylmethionine. Has broad substrate specificity with 6-aminopurine nucleosides as preferred substrates. This is S-methyl-5'-thioadenosine phosphorylase from Gloeobacter violaceus (strain ATCC 29082 / PCC 7421).